Reading from the N-terminus, the 233-residue chain is Sugar fermentation stimulation protein homolog (233 aa).

The protein belongs to the SfsA family.

The chain is Sugar fermentation stimulation protein homolog from Acetivibrio thermocellus (strain ATCC 27405 / DSM 1237 / JCM 9322 / NBRC 103400 / NCIMB 10682 / NRRL B-4536 / VPI 7372) (Clostridium thermocellum).